The following is a 191-amino-acid chain: Clusterin (191 aa).

Residues Asn-79, Asn-116, Asn-142, and Asn-162 are each glycosylated (N-linked (GlcNAc...) asparagine). The residue at position 184 (Ser-184) is a Phosphoserine.

The protein belongs to the clusterin family. As to quaternary structure, antiparallel disulfide-linked heterodimer of an alpha chain and a beta chain. Self-associates and forms higher oligomers. Interacts with a broad range of misfolded proteins, including APP, APOC2 and LYZ. Slightly acidic pH promotes interaction with misfolded proteins. Forms high-molecular weight oligomers upon interaction with misfolded proteins. Interacts with APOA1, LRP2, CLUAP1 and PON1. Interacts with the complement membrane attack complex. Interacts (via alpha chain) with XRCC6. Interacts with SYVN1, COMMD1, BTRC, CUL1 and with ubiquitin and SCF (SKP1-CUL1-F-box protein) E3 ubiquitin-protein ligase complexes. Interacts (via alpha chain) with BAX in stressed cells, where BAX undergoes a conformation change leading to association with the mitochondrial membrane. Does not interact with BAX in unstressed cells. Found in a complex with LTF, CLU, EPPIN and SEMG1. Interacts (immaturely glycosylated pre-secreted form) with HSPA5; this interaction promotes CLU stability and facilitates stress-induced CLU retrotranslocation from the secretory pathway to the mitochondria, thereby reducing stress-induced apoptosis by stabilizing mitochondrial membrane integrity. Interacts with BCL2L1; this interaction releases and activates BAX and promotes cell death. Interacts with TGFBR2 and ACVR1. Interacts (secreted form) with STMN3; this interaction may act as an important modulator during neuronal differentiation. Post-translationally, proteolytically cleaved on its way through the secretory system, probably within the Golgi lumen. Proteolytic cleavage is not necessary for its chaperone activity. All non-secreted forms are not proteolytically cleaved. Chaperone activity of uncleaved forms is dependent on a non-reducing environment. Polyubiquitinated, leading to proteasomal degradation. Under cellular stress, the intracellular level of cleaved form is reduced due to proteasomal degradation. In terms of processing, heavily N-glycosylated. About 30% of the protein mass is comprised of complex N-linked carbohydrate. Endoplasmic reticulum (ER) stress induces changes in glycosylation status and increases level of hypoglycosylated forms. Core carbohydrates are essential for chaperone activity. Non-secreted forms are hypoglycosylated or unglycosylated.

It is found in the secreted. It localises to the nucleus. The protein localises to the cytoplasm. The protein resides in the mitochondrion membrane. Its subcellular location is the cytosol. It is found in the microsome. It localises to the endoplasmic reticulum. The protein localises to the mitochondrion. The protein resides in the perinuclear region. Its subcellular location is the cytoplasmic vesicle. It is found in the secretory vesicle. It localises to the chromaffin granule. Functions as extracellular chaperone that prevents aggregation of non native proteins. Prevents stress-induced aggregation of blood plasma proteins. Inhibits formation of amyloid fibrils by APP, APOC2, B2M, CALCA, CSN3, SNCA and aggregation-prone LYZ variants (in vitro). Does not require ATP. Maintains partially unfolded proteins in a state appropriate for subsequent refolding by other chaperones, such as HSPA8/HSC70. Does not refold proteins by itself. Binding to cell surface receptors triggers internalization of the chaperone-client complex and subsequent lysosomal or proteasomal degradation. When secreted, protects cells against apoptosis and against cytolysis by complement: inhibits assembly of the complement membrane attack complex (MAC) by preventing polymerization of C9 pore component of the MAC complex. Intracellular forms interact with ubiquitin and SCF (SKP1-CUL1-F-box protein) E3 ubiquitin-protein ligase complexes and promote the ubiquitination and subsequent proteasomal degradation of target proteins. Promotes proteasomal degradation of COMMD1 and IKBKB. Modulates NF-kappa-B transcriptional activity. Following stress, promotes apoptosis. Inhibits apoptosis when associated with the mitochondrial membrane by interference with BAX-dependent release of cytochrome c into the cytoplasm. Plays a role in the regulation of cell proliferation. An intracellular form suppresses stress-induced apoptosis by stabilizing mitochondrial membrane integrity through interaction with HSPA5. Secreted form does not affect caspase or BAX-mediated intrinsic apoptosis and TNF-induced NF-kappa-B-activity. Secreted form act as an important modulator during neuronal differentiation through interaction with STMN3. Plays a role in the clearance of immune complexes that arise during cell injury. The sequence is that of Clusterin from Mesocricetus auratus (Golden hamster).